We begin with the raw amino-acid sequence, 272 residues long: 3-methyl-2-oxobutanoate hydroxymethyltransferase (272 aa).

Positions 53 and 92 each coordinate Mg(2+). 3-methyl-2-oxobutanoate is bound by residues 53-54, Asp92, and Lys120; that span reads DS. Glu122 lines the Mg(2+) pocket. Glu189 functions as the Proton acceptor in the catalytic mechanism.

This sequence belongs to the PanB family. Homodecamer; pentamer of dimers. Mg(2+) is required as a cofactor.

The protein localises to the cytoplasm. The catalysed reaction is 3-methyl-2-oxobutanoate + (6R)-5,10-methylene-5,6,7,8-tetrahydrofolate + H2O = 2-dehydropantoate + (6S)-5,6,7,8-tetrahydrofolate. The protein operates within cofactor biosynthesis; (R)-pantothenate biosynthesis; (R)-pantoate from 3-methyl-2-oxobutanoate: step 1/2. In terms of biological role, catalyzes the reversible reaction in which hydroxymethyl group from 5,10-methylenetetrahydrofolate is transferred onto alpha-ketoisovalerate to form ketopantoate. This chain is 3-methyl-2-oxobutanoate hydroxymethyltransferase, found in Ralstonia pickettii (strain 12J).